We begin with the raw amino-acid sequence, 495 residues long: Alkaline protease 2 (495 aa).

An N-terminal signal peptide occupies residues 1–16 (MKGYLSLSILPLLVAA). Residues 17 to 136 (SPVVVDSIHN…IEKDSEVHTM (120 aa)) constitute a propeptide that is removed on maturation. The region spanning 43-136 (SYIVVFKKHV…IEKDSEVHTM (94 aa)) is the Inhibitor I9 domain. Residues 146-452 (PWGLARISHR…GGSSNYTDII (307 aa)) form the Peptidase S8 domain. Catalysis depends on charge relay system residues Asp-182 and His-214. Asn-284 is a glycosylation site (N-linked (GlcNAc...) asparagine). The active-site Charge relay system is Ser-380. N-linked (GlcNAc...) asparagine glycosylation is found at Asn-447 and Asn-460.

The protein belongs to the peptidase S8 family.

The catalysed reaction is Hydrolysis of proteins with broad specificity, and of Bz-Arg-OEt &gt; Ac-Tyr-OEt. Does not hydrolyze peptide amides.. Functionally, alkaline protease that allows assimilation of proteinaceous substrates. Acts as a significant virulence factor in invasive aspergillosis. Required for regular sporulation. This chain is Alkaline protease 2 (alp2), found in Aspergillus fumigatus (strain CBS 144.89 / FGSC A1163 / CEA10) (Neosartorya fumigata).